Consider the following 161-residue polypeptide: ATP synthase subunit b' (161 aa).

The helical transmembrane segment at 26-45 (LPLMAIQFLLLAFVLDKIFY) threads the bilayer.

It belongs to the ATPase B chain family. F-type ATPases have 2 components, F(1) - the catalytic core - and F(0) - the membrane proton channel. F(1) has five subunits: alpha(3), beta(3), gamma(1), delta(1), epsilon(1). F(0) has four main subunits: a(1), b(1), b'(1) and c(10-14). The alpha and beta chains form an alternating ring which encloses part of the gamma chain. F(1) is attached to F(0) by a central stalk formed by the gamma and epsilon chains, while a peripheral stalk is formed by the delta, b and b' chains.

Its subcellular location is the cellular thylakoid membrane. In terms of biological role, f(1)F(0) ATP synthase produces ATP from ADP in the presence of a proton or sodium gradient. F-type ATPases consist of two structural domains, F(1) containing the extramembraneous catalytic core and F(0) containing the membrane proton channel, linked together by a central stalk and a peripheral stalk. During catalysis, ATP synthesis in the catalytic domain of F(1) is coupled via a rotary mechanism of the central stalk subunits to proton translocation. Component of the F(0) channel, it forms part of the peripheral stalk, linking F(1) to F(0). The b'-subunit is a diverged and duplicated form of b found in plants and photosynthetic bacteria. In Trichodesmium erythraeum (strain IMS101), this protein is ATP synthase subunit b'.